The sequence spans 412 residues: Serine hydroxymethyltransferase (412 aa).

Residues L116 and 120-122 (GHL) contribute to the (6S)-5,6,7,8-tetrahydrofolate site. Residue K225 is modified to N6-(pyridoxal phosphate)lysine. Residues E241 and 350 to 352 (SPF) contribute to the (6S)-5,6,7,8-tetrahydrofolate site.

This sequence belongs to the SHMT family. Homodimer. Pyridoxal 5'-phosphate is required as a cofactor.

It localises to the cytoplasm. It carries out the reaction (6R)-5,10-methylene-5,6,7,8-tetrahydrofolate + glycine + H2O = (6S)-5,6,7,8-tetrahydrofolate + L-serine. It participates in one-carbon metabolism; tetrahydrofolate interconversion. It functions in the pathway amino-acid biosynthesis; glycine biosynthesis; glycine from L-serine: step 1/1. Catalyzes the reversible interconversion of serine and glycine with tetrahydrofolate (THF) serving as the one-carbon carrier. This reaction serves as the major source of one-carbon groups required for the biosynthesis of purines, thymidylate, methionine, and other important biomolecules. Also exhibits THF-independent aldolase activity toward beta-hydroxyamino acids, producing glycine and aldehydes, via a retro-aldol mechanism. In Enterococcus faecalis (strain ATCC 700802 / V583), this protein is Serine hydroxymethyltransferase.